Consider the following 628-residue polypeptide: Carbon monoxide dehydrogenase 1 (628 aa).

Cys44, Cys52, Cys53, Cys56, Cys61, and Cys75 together coordinate [4Fe-4S] cluster. [Ni-4Fe-5S] cluster contacts are provided by His266, Cys302, Cys340, Cys448, Cys478, and Cys519.

This sequence belongs to the Ni-containing carbon monoxide dehydrogenase family. As to quaternary structure, homodimer. [4Fe-4S] cluster is required as a cofactor. It depends on [Ni-4Fe-5S] cluster as a cofactor.

The catalysed reaction is CO + 2 oxidized [2Fe-2S]-[ferredoxin] + H2O = 2 reduced [2Fe-2S]-[ferredoxin] + CO2 + 2 H(+). Its function is as follows. CODH oxidizes carbon monoxide coupled, via CooF, to the reduction of a hydrogen cation by a hydrogenase (possibly CooH). The sequence is that of Carbon monoxide dehydrogenase 1 (cooS1) from Methanosarcina acetivorans (strain ATCC 35395 / DSM 2834 / JCM 12185 / C2A).